A 353-amino-acid polypeptide reads, in one-letter code: Melanin-concentrating hormone receptor 1 (353 aa).

A disordered region spans residues 1-29 (MDLEASLLPTGPNASNTSDGPDNLTSAGS). Topologically, residues 1-44 (MDLEASLLPTGPNASNTSDGPDNLTSAGSPPRTGSISYINIIMP) are extracellular. Over residues 12–29 (PNASNTSDGPDNLTSAGS) the composition is skewed to polar residues. 3 N-linked (GlcNAc...) asparagine glycosylation sites follow: asparagine 13, asparagine 16, and asparagine 23. The chain crosses the membrane as a helical span at residues 45 to 67 (SVFGTICLLGIIGNSTVIFAVVK). At 68–79 (KSKLHWCNNVPD) the chain is on the cytoplasmic side. Residues 80–102 (IFIINLSVVDLLFLLGMPFMIHQ) form a helical membrane-spanning segment. The Extracellular portion of the chain corresponds to 103-116 (LMGNGVWHFGETMC). Cysteines 116 and 194 form a disulfide. The helical transmembrane segment at 117 to 139 (TLITAMDANSQFTSTYILTAMAI) threads the bilayer. At 140-158 (DRYLATVHPISSTKFRKPS) the chain is on the cytoplasmic side. The chain crosses the membrane as a helical span at residues 159-181 (VATLVICLLWALSFISITPVWLY). Topologically, residues 182–209 (ARLIPFPGGAVGCGIRLPNPDTDLYWFT) are extracellular. The helical transmembrane segment at 210 to 232 (LYQFFLAFALPFVVITAAYVRIL) threads the bilayer. Over 233–252 (QRMTSSVAPASQRSIRLRTK) the chain is Cytoplasmic. A helical membrane pass occupies residues 253–275 (RVTRTAIAICLVFFVCWAPYYVL). The Extracellular segment spans residues 276 to 289 (QLTQLSISRPTLTF). Residues 290–312 (VYLYNAAISLGYANSCLNPFVYI) traverse the membrane as a helical segment. The Cytoplasmic portion of the chain corresponds to 313–353 (VLCETFRKRLVLSVKPAAQGQLRAVSNAQTADEERTESKGT).

This sequence belongs to the G-protein coupled receptor 1 family. In terms of assembly, interacts with NCDN. As to expression, highest level in brain, particularly in the frontal cortex and hypothalamus, lower levels in the liver and heart.

The protein localises to the cell membrane. In terms of biological role, receptor for melanin-concentrating hormone, coupled to both G proteins that inhibit adenylyl cyclase and G proteins that activate phosphoinositide hydrolysis. This is Melanin-concentrating hormone receptor 1 from Homo sapiens (Human).